A 199-amino-acid chain; its full sequence is RNA-free ribonuclease P (199 aa).

It belongs to the HARP family.

It catalyses the reaction Endonucleolytic cleavage of RNA, removing 5'-extranucleotides from tRNA precursor.. RNA-free RNase P that catalyzes the removal of the 5'-leader sequence from pre-tRNA to produce the mature 5'-terminus. This Thermococcus onnurineus (strain NA1) protein is RNA-free ribonuclease P.